Here is a 249-residue protein sequence, read N- to C-terminus: Glutathione S-transferase S1 (249 aa).

The span at 1 to 38 (MADEAQAPPAEGAPPAEGEAPPPAEGAEGAVEGGEAAP) shows a compositional bias: low complexity. Residues 1–42 (MADEAQAPPAEGAPPAEGEAPPPAEGAEGAVEGGEAAPPAEP) are disordered. The 78-residue stretch at 48-125 (HSYTLFYFNV…FLAKTVGLCG (78 aa)) folds into the GST N-terminal domain. Glutathione contacts are provided by residues tyrosine 54, tryptophan 85, lysine 89, 96 to 97 (QM), and 109 to 110 (QS). Residues 127-249 (TPWEDLQIDI…WIEKRPVTEV (123 aa)) enclose the GST C-terminal domain.

This sequence belongs to the GST superfamily. Sigma family. Homodimer.

It carries out the reaction RX + glutathione = an S-substituted glutathione + a halide anion + H(+). In terms of biological role, conjugation of reduced glutathione to a wide number of exogenous and endogenous hydrophobic electrophiles. May be involved in the detoxification of metabolites produced during cellular division and morphogenesis. This is Glutathione S-transferase S1 from Drosophila melanogaster (Fruit fly).